We begin with the raw amino-acid sequence, 514 residues long: Folylpolyglutamate synthase (514 aa).

82–85 provides a ligand contact to ATP; that stretch reads GKGS. Mg(2+) is bound by residues serine 107, glutamate 186, and histidine 214. The ATP site is built by arginine 339 and aspartate 355.

The protein belongs to the folylpolyglutamate synthase family. It depends on a monovalent cation as a cofactor.

The protein localises to the mitochondrion inner membrane. It is found in the mitochondrion matrix. It localises to the cytoplasm. It catalyses the reaction (6S)-5,6,7,8-tetrahydrofolyl-(gamma-L-Glu)(n) + L-glutamate + ATP = (6S)-5,6,7,8-tetrahydrofolyl-(gamma-L-Glu)(n+1) + ADP + phosphate + H(+). The protein operates within cofactor biosynthesis; tetrahydrofolylpolyglutamate biosynthesis. Functionally, catalyzes conversion of folates to polyglutamate derivatives allowing concentration of folate compounds in the cell and the intracellular retention of these cofactors, which are important substrates for most of the folate-dependent enzymes that are involved in one-carbon transfer reactions involved in purine, pyrimidine and amino acid synthesis. This is Folylpolyglutamate synthase (MET7) from Candida albicans (Yeast).